Here is a 442-residue protein sequence, read N- to C-terminus: MVQLHNFFFFIIFMVVLCGTAAPVLLKWFVSRDVSTGAPFFNGTIIPILISLFSLLVYLHSRKIIRSMDGAKSGVLVRASRPILLPDIIGRSSSETRARKALFFFVPVLHFCLLESKGDFSYLESFCGVLCLLFFCTFFFLARDRSAKRERARRRKGQTLRPNGNEQRRNDKMRCSGHPHLDLERRVEGFGPLAFPVPPELGGACVGGVPPEIGLEALALPRSRQLMAMAVGHDYYQKVPMKMNISHGGVCICMLGVLLSNTKKIQFTQRLPLGYELHMGKERCCLRGLDHLHGPTFHSICGNLMIYKPSLTNDRLMFEHDESLHADLLLINFPASYKNGKLEHFLHWWMKNRKHNNFWLTMFPEKRYFRERTSTAEVAIHTNLFTDLYALIGTGSSRTGGWYTTIMKLPFIFFIWIGFMLASLGGLPSLLRQLQKDKLRWN.

3 consecutive transmembrane segments (helical) span residues 6–26, 39–59, and 122–142; these read NFFF…PVLL, PFFN…LVYL, and YLES…FFLA. The disordered stretch occupies residues 151–175; sequence RARRRKGQTLRPNGNEQRRNDKMRC. Positions 166–175 are enriched in basic and acidic residues; that stretch reads EQRRNDKMRC. The helical transmembrane segment at 411–431 threads the bilayer; that stretch reads FIFFIWIGFMLASLGGLPSLL.

The protein belongs to the CcmF/CycK/Ccl1/NrfE/CcsA family. As to quaternary structure, interacts with CCMFN2.

The protein localises to the mitochondrion inner membrane. Forms a complex with CCMFN1, CCMFN2 and CCMH that performs the assembly of heme with c-type apocytochromes in mitochondria. In Arabidopsis thaliana (Mouse-ear cress), this protein is Cytochrome c biogenesis CcmF C-terminal-like mitochondrial protein (CCMFC).